Reading from the N-terminus, the 213-residue chain is Golgi SNAP receptor complex member 2 homolog memb-1 (213 aa).

Topologically, residues Met1–Asp189 are cytoplasmic. A helical; Anchor for type IV membrane protein transmembrane segment spans residues Trp190–Phe210. The Vesicular portion of the chain corresponds to Trp211–Gly213.

It belongs to the GOSR2 family. As to quaternary structure, part of a unique SNARE complex.

The protein localises to the golgi apparatus. It localises to the cis-Golgi network membrane. It is found in the golgi apparatus membrane. The protein resides in the endoplasmic reticulum membrane. Its function is as follows. Involved in transport of proteins from the cis/medial-Golgi to the trans-Golgi network. This is Golgi SNAP receptor complex member 2 homolog memb-1 from Caenorhabditis elegans.